Consider the following 127-residue polypeptide: Anti-adapter protein IraD (127 aa).

The protein belongs to the GpW/Gp25 family. IraD subfamily. As to quaternary structure, interacts with RssB.

It localises to the cytoplasm. In terms of biological role, inhibits RpoS proteolysis by regulating RssB activity, thereby increasing the stability of the sigma stress factor RpoS during oxidative stress. Its effect on RpoS stability is due to its interaction with RssB, which probably blocks the interaction of RssB with RpoS, and the consequent delivery of the RssB-RpoS complex to the ClpXP protein degradation pathway. This is Anti-adapter protein IraD from Escherichia coli (strain UTI89 / UPEC).